Consider the following 195-residue polypeptide: MPPTFVLASASPARKRLLEMAGISPLVAVSHFDESSLAADNTVALVEALAKAKAGTVASKFADALVLGCDSLLLVNGQTYGKPESPAVAIARWQTMRGQVGELYTGHALIDRTQNRCLCQTGLTKVHFADVDDDTIQAYVGSGEPLQCAGAFALEGKGGMLINKLDGCSSNVIGLSLPILRSLLQRLGYSLKDFW.

Aspartate 70 functions as the Proton acceptor in the catalytic mechanism.

It belongs to the Maf family. A divalent metal cation is required as a cofactor.

It localises to the cytoplasm. It catalyses the reaction a ribonucleoside 5'-triphosphate + H2O = a ribonucleoside 5'-phosphate + diphosphate + H(+). It carries out the reaction a 2'-deoxyribonucleoside 5'-triphosphate + H2O = a 2'-deoxyribonucleoside 5'-phosphate + diphosphate + H(+). Functionally, nucleoside triphosphate pyrophosphatase. May have a dual role in cell division arrest and in preventing the incorporation of modified nucleotides into cellular nucleic acids. In Synechocystis sp. (strain ATCC 27184 / PCC 6803 / Kazusa), this protein is Nucleoside triphosphate pyrophosphatase.